We begin with the raw amino-acid sequence, 357 residues long: Phosphoribosylformylglycinamidine cyclo-ligase (357 aa).

The protein belongs to the AIR synthase family.

It is found in the cytoplasm. The enzyme catalyses 2-formamido-N(1)-(5-O-phospho-beta-D-ribosyl)acetamidine + ATP = 5-amino-1-(5-phospho-beta-D-ribosyl)imidazole + ADP + phosphate + H(+). The protein operates within purine metabolism; IMP biosynthesis via de novo pathway; 5-amino-1-(5-phospho-D-ribosyl)imidazole from N(2)-formyl-N(1)-(5-phospho-D-ribosyl)glycinamide: step 2/2. This is Phosphoribosylformylglycinamidine cyclo-ligase from Agrobacterium fabrum (strain C58 / ATCC 33970) (Agrobacterium tumefaciens (strain C58)).